Reading from the N-terminus, the 252-residue chain is Ribonuclease HII (252 aa).

One can recognise an RNase H type-2 domain in the interval 68 to 252; it reads EYVAGLDEVG…FGPVRDRLRS (185 aa). The a divalent metal cation site is built by Asp-74, Glu-75, and Asp-165.

It belongs to the RNase HII family. Mn(2+) is required as a cofactor. It depends on Mg(2+) as a cofactor.

The protein resides in the cytoplasm. The catalysed reaction is Endonucleolytic cleavage to 5'-phosphomonoester.. Functionally, endonuclease that specifically degrades the RNA of RNA-DNA hybrids. The chain is Ribonuclease HII from Lacticaseibacillus paracasei (strain ATCC 334 / BCRC 17002 / CCUG 31169 / CIP 107868 / KCTC 3260 / NRRL B-441) (Lactobacillus paracasei).